Reading from the N-terminus, the 498-residue chain is ATP synthase subunit beta, chloroplastic (498 aa).

172–179 is an ATP binding site; it reads GGAGVGKT.

The protein belongs to the ATPase alpha/beta chains family. F-type ATPases have 2 components, CF(1) - the catalytic core - and CF(0) - the membrane proton channel. CF(1) has five subunits: alpha(3), beta(3), gamma(1), delta(1), epsilon(1). CF(0) has four main subunits: a(1), b(1), b'(1) and c(9-12).

It localises to the plastid. The protein resides in the chloroplast thylakoid membrane. The enzyme catalyses ATP + H2O + 4 H(+)(in) = ADP + phosphate + 5 H(+)(out). Functionally, produces ATP from ADP in the presence of a proton gradient across the membrane. The catalytic sites are hosted primarily by the beta subunits. In Nicotiana bigelovii (Bigelov's tobacco), this protein is ATP synthase subunit beta, chloroplastic.